We begin with the raw amino-acid sequence, 634 residues long: Threonine--tRNA ligase (634 aa).

Residues 1 to 61 (MINITLPDGS…DHDASLRIIT (61 aa)) enclose the TGS domain. The tract at residues 243–534 (DHRRIGKAQD…LIEHHAGAFP (292 aa)) is catalytic. Zn(2+) contacts are provided by Cys-334, His-385, and His-511.

It belongs to the class-II aminoacyl-tRNA synthetase family. As to quaternary structure, homodimer. It depends on Zn(2+) as a cofactor.

It localises to the cytoplasm. The enzyme catalyses tRNA(Thr) + L-threonine + ATP = L-threonyl-tRNA(Thr) + AMP + diphosphate + H(+). Its function is as follows. Catalyzes the attachment of threonine to tRNA(Thr) in a two-step reaction: L-threonine is first activated by ATP to form Thr-AMP and then transferred to the acceptor end of tRNA(Thr). Also edits incorrectly charged L-seryl-tRNA(Thr). The sequence is that of Threonine--tRNA ligase from Xanthomonas oryzae pv. oryzae (strain MAFF 311018).